The sequence spans 360 residues: tRNA N6-adenosine threonylcarbamoyltransferase (360 aa).

Positions 115 and 119 each coordinate Fe cation. Substrate is bound by residues 137 to 141, Asp-170, Gly-183, and Asn-283; that span reads LVSGG. Asp-311 is a binding site for Fe cation.

It belongs to the KAE1 / TsaD family. Fe(2+) is required as a cofactor.

It localises to the cytoplasm. It catalyses the reaction L-threonylcarbamoyladenylate + adenosine(37) in tRNA = N(6)-L-threonylcarbamoyladenosine(37) in tRNA + AMP + H(+). Required for the formation of a threonylcarbamoyl group on adenosine at position 37 (t(6)A37) in tRNAs that read codons beginning with adenine. Is involved in the transfer of the threonylcarbamoyl moiety of threonylcarbamoyl-AMP (TC-AMP) to the N6 group of A37, together with TsaE and TsaB. TsaD likely plays a direct catalytic role in this reaction. The chain is tRNA N6-adenosine threonylcarbamoyltransferase from Rhizobium meliloti (strain 1021) (Ensifer meliloti).